The sequence spans 209 residues: Kynurenine formamidase (209 aa).

W19 contacts substrate. H49, H53, and D55 together coordinate Zn(2+). H59 functions as the Proton donor/acceptor in the catalytic mechanism. 2 residues coordinate Zn(2+): H160 and E172.

Belongs to the Cyclase 1 superfamily. KynB family. As to quaternary structure, homodimer. Zn(2+) serves as cofactor.

It carries out the reaction N-formyl-L-kynurenine + H2O = L-kynurenine + formate + H(+). It functions in the pathway amino-acid degradation; L-tryptophan degradation via kynurenine pathway; L-kynurenine from L-tryptophan: step 2/2. Functionally, catalyzes the hydrolysis of N-formyl-L-kynurenine to L-kynurenine, the second step in the kynurenine pathway of tryptophan degradation. This Ralstonia nicotianae (strain ATCC BAA-1114 / GMI1000) (Ralstonia solanacearum) protein is Kynurenine formamidase.